Consider the following 62-residue polypeptide: Potassium channel toxin alpha-KTx 18.3 (62 aa).

The N-terminal stretch at M1–A26 is a signal peptide. Disulfide bonds link C34–C53, C39–C58, and C43–C60.

Belongs to the short scorpion toxin superfamily. Potassium channel inhibitor family. Alpha-KTx 18 subfamily. In terms of tissue distribution, expressed by the venom gland.

The protein localises to the secreted. Functionally, probable voltage-gated potassium channel inhibitor. The chain is Potassium channel toxin alpha-KTx 18.3 from Tityus discrepans (Venezuelan scorpion).